We begin with the raw amino-acid sequence, 170 residues long: Zinc finger matrin-type protein 5 (170 aa).

The C3H1-type zinc-finger motif lies at 51–79 (EQNKRPCRKFLLTGQCDFGSNCRFSHMSE). Residues 150–170 (PPSLRAPPPGGWPLQPRVQWG) form a disordered region.

In terms of assembly, component of the U11/U12 snRNPs that are part of the U12-type spliceosome. Not found in the major spliceosome.

The protein localises to the nucleus. This chain is Zinc finger matrin-type protein 5 (ZMAT5), found in Homo sapiens (Human).